The sequence spans 477 residues: Ribulose bisphosphate carboxylase large chain (477 aa).

Positions 1–2 (MS) are excised as a propeptide. P3 is modified (N-acetylproline). At K14 the chain carries N6,N6,N6-trimethyllysine. The substrate site is built by N123 and T173. K175 acts as the Proton acceptor in catalysis. Substrate is bound at residue K177. Mg(2+)-binding residues include K201, D203, and E204. An N6-carboxylysine modification is found at K201. The active-site Proton acceptor is the H294. The substrate site is built by R295, H327, and S379.

It belongs to the RuBisCO large chain family. Type I subfamily. In terms of assembly, heterohexadecamer of 8 large chains and 8 small chains; disulfide-linked. The disulfide link is formed within the large subunit homodimers. It depends on Mg(2+) as a cofactor. Post-translationally, the disulfide bond which can form in the large chain dimeric partners within the hexadecamer appears to be associated with oxidative stress and protein turnover.

The protein resides in the plastid. It is found in the chloroplast. The catalysed reaction is 2 (2R)-3-phosphoglycerate + 2 H(+) = D-ribulose 1,5-bisphosphate + CO2 + H2O. The enzyme catalyses D-ribulose 1,5-bisphosphate + O2 = 2-phosphoglycolate + (2R)-3-phosphoglycerate + 2 H(+). Functionally, ruBisCO catalyzes two reactions: the carboxylation of D-ribulose 1,5-bisphosphate, the primary event in carbon dioxide fixation, as well as the oxidative fragmentation of the pentose substrate in the photorespiration process. Both reactions occur simultaneously and in competition at the same active site. This chain is Ribulose bisphosphate carboxylase large chain, found in Nicotiana otophora (Tobacco).